Consider the following 269-residue polypeptide: Putative phosphatase M6_Spy0533 (269 aa).

Asp9 (nucleophile) is an active-site residue. Residue Asp9 participates in Mg(2+) binding. Ile10 contributes to the phosphate binding site. Asp11 is a binding site for Mg(2+). Phosphate-binding positions include 43–44 (TG) and Lys196. Asp219 is a binding site for Mg(2+). Asn222 provides a ligand contact to phosphate.

Mg(2+) is required as a cofactor.

The sequence is that of Putative phosphatase M6_Spy0533 from Streptococcus pyogenes serotype M6 (strain ATCC BAA-946 / MGAS10394).